Here is a 418-residue protein sequence, read N- to C-terminus: Bile acid-CoA:amino acid N-acyltransferase (418 aa).

S125 carries the phosphoserine modification. Residues C235, D328, and H362 each act as charge relay system in the active site. At S416 the chain carries Phosphoserine.

It belongs to the C/M/P thioester hydrolase family. Monomer. Expressed in the gallbladder mucosa and pancreas. Expressed in hepatocytes (at protein level).

Its subcellular location is the cytoplasm. The protein resides in the cytosol. It localises to the peroxisome. It catalyses the reaction choloyl-CoA + glycine = glycocholate + CoA + H(+). It carries out the reaction hexadecanoyl-CoA + H2O = hexadecanoate + CoA + H(+). The enzyme catalyses choloyl-CoA + H2O = cholate + CoA + H(+). The catalysed reaction is chenodeoxycholoyl-CoA + H2O = chenodeoxycholate + CoA + H(+). It catalyses the reaction eicosanoyl-CoA + H2O = eicosanoate + CoA + H(+). It carries out the reaction octadecanoyl-CoA + H2O = octadecanoate + CoA + H(+). The enzyme catalyses docosanoyl-CoA + H2O = docosanoate + CoA + H(+). The catalysed reaction is tetracosanoyl-CoA + H2O = tetracosanoate + CoA + H(+). It catalyses the reaction hexacosanoyl-CoA + H2O = hexacosanoate + CoA + H(+). It carries out the reaction dodecanoyl-CoA + H2O = dodecanoate + CoA + H(+). The enzyme catalyses tetradecanoyl-CoA + H2O = tetradecanoate + CoA + H(+). The catalysed reaction is choloyl-CoA + taurine = taurocholate + CoA + H(+). It catalyses the reaction chenodeoxycholoyl-CoA + glycine = glycochenodeoxycholate + CoA + H(+). It carries out the reaction chenodeoxycholoyl-CoA + taurine = taurochenodeoxycholate + CoA + H(+). The enzyme catalyses eicosanoyl-CoA + glycine = N-eicosanoylglycinate + CoA + H(+). The catalysed reaction is hexacosanoyl-CoA + glycine = N-hexacosanoylglycine + CoA + H(+). It catalyses the reaction docosanoyl-CoA + glycine = N-docosanoylglycine + CoA + H(+). In terms of biological role, catalyzes the amidation of bile acids (BAs) with the amino acids taurine and glycine. More than 95% of the BAs are N-acyl amidates with glycine and taurine. Amidation of BAs in the liver with glycine or taurine prior to their excretion into bile is an important biochemical event in bile acid metabolism. This conjugation (or amidation) plays several important biological roles in that it promotes the secretion of BAs and cholesterol into bile and increases the detergent properties of BAs in the intestine, which facilitates lipid and vitamin absorption. May also act as an acyl-CoA thioesterase that regulates intracellular levels of free fatty acids. In vitro, catalyzes the hydrolysis of long- and very long-chain saturated acyl-CoAs to the free fatty acid and coenzyme A (CoASH), and conjugates glycine to these acyl-CoAs. In Homo sapiens (Human), this protein is Bile acid-CoA:amino acid N-acyltransferase (BAAT).